We begin with the raw amino-acid sequence, 547 residues long: Chaperonin GroEL (547 aa).

ATP contacts are provided by residues 30–33, lysine 51, 87–91, glycine 415, 479–481, and aspartate 495; these read TLGP, DGTTT, and NAA.

This sequence belongs to the chaperonin (HSP60) family. In terms of assembly, forms a cylinder of 14 subunits composed of two heptameric rings stacked back-to-back. Interacts with the co-chaperonin GroES.

It localises to the cytoplasm. It carries out the reaction ATP + H2O + a folded polypeptide = ADP + phosphate + an unfolded polypeptide.. In terms of biological role, together with its co-chaperonin GroES, plays an essential role in assisting protein folding. The GroEL-GroES system forms a nano-cage that allows encapsulation of the non-native substrate proteins and provides a physical environment optimized to promote and accelerate protein folding. The chain is Chaperonin GroEL from Delftia acidovorans (strain DSM 14801 / SPH-1).